We begin with the raw amino-acid sequence, 376 residues long: Putative glutamate--cysteine ligase 2 (376 aa).

The protein belongs to the glutamate--cysteine ligase type 2 family. YbdK subfamily.

The catalysed reaction is L-cysteine + L-glutamate + ATP = gamma-L-glutamyl-L-cysteine + ADP + phosphate + H(+). ATP-dependent carboxylate-amine ligase which exhibits weak glutamate--cysteine ligase activity. This is Putative glutamate--cysteine ligase 2 from Paracoccus denitrificans (strain Pd 1222).